Reading from the N-terminus, the 1062-residue chain is Carbamoyl phosphate synthase pyrimidine-specific large chain (1062 aa).

The interval 1–401 (MGKREDIKKI…SLLKAVRSLE (401 aa)) is carboxyphosphate synthetic domain. Residues arginine 129, arginine 169, glycine 175, glycine 176, lysine 208, isoleucine 210, glutamate 215, glycine 241, valine 242, histidine 243, glutamine 284, and glutamate 298 each contribute to the ATP site. The ATP-grasp 1 domain maps to 133–327 (RALMKELNEP…IAKIAAKIAV (195 aa)). Residues glutamine 284, glutamate 298, and asparagine 300 each coordinate Mg(2+). 3 residues coordinate Mn(2+): glutamine 284, glutamate 298, and asparagine 300. The oligomerization domain stretch occupies residues 402 to 546 (AGVYHLDQPD…YGTYEEENES (145 aa)). The segment at 547–929 (ERTDKKSILV…ALYKGLIASG (383 aa)) is carbamoyl phosphate synthetic domain. The ATP-grasp 2 domain occupies 671-861 (EQTLVELNIP…MANVATKVML (191 aa)). ATP-binding residues include arginine 707, arginine 746, leucine 748, glutamate 752, glycine 777, valine 778, histidine 779, serine 780, glutamine 820, and glutamate 832. Positions 820, 832, and 834 each coordinate Mg(2+). 3 residues coordinate Mn(2+): glutamine 820, glutamate 832, and asparagine 834. The MGS-like domain occupies 930–1062 (MSIPTHGSVL…FSAESMPVMQ (133 aa)). The interval 930-1062 (MSIPTHGSVL…FSAESMPVMQ (133 aa)) is allosteric domain.

The protein belongs to the CarB family. Composed of two chains; the small (or glutamine) chain promotes the hydrolysis of glutamine to ammonia, which is used by the large (or ammonia) chain to synthesize carbamoyl phosphate. Tetramer of heterodimers (alpha,beta)4. Mg(2+) serves as cofactor. Requires Mn(2+) as cofactor.

It catalyses the reaction hydrogencarbonate + L-glutamine + 2 ATP + H2O = carbamoyl phosphate + L-glutamate + 2 ADP + phosphate + 2 H(+). It carries out the reaction hydrogencarbonate + NH4(+) + 2 ATP = carbamoyl phosphate + 2 ADP + phosphate + 2 H(+). The protein operates within amino-acid biosynthesis; L-arginine biosynthesis; carbamoyl phosphate from bicarbonate: step 1/1. Its pathway is pyrimidine metabolism; UMP biosynthesis via de novo pathway; (S)-dihydroorotate from bicarbonate: step 1/3. Functionally, small subunit of the glutamine-dependent carbamoyl phosphate synthetase (CPSase). CPSase catalyzes the formation of carbamoyl phosphate from the ammonia moiety of glutamine, carbonate, and phosphate donated by ATP, constituting the first step of the biosynthetic pathway leading to pyrimidine nucleotides. The large subunit (synthetase) binds the substrates ammonia (free or transferred from glutamine from the small subunit), hydrogencarbonate and ATP and carries out an ATP-coupled ligase reaction, activating hydrogencarbonate by forming carboxy phosphate which reacts with ammonia to form carbamoyl phosphate. This is Carbamoyl phosphate synthase pyrimidine-specific large chain (pyrAB) from Halalkalibacterium halodurans (strain ATCC BAA-125 / DSM 18197 / FERM 7344 / JCM 9153 / C-125) (Bacillus halodurans).